Consider the following 286-residue polypeptide: Putative inorganic pyrophosphatase C3A12.02 (286 aa).

Arginine 85 is a binding site for diphosphate. Residues aspartate 122, aspartate 127, and aspartate 159 each coordinate Mg(2+).

The protein belongs to the PPase family. The cofactor is Mg(2+).

The protein resides in the cytoplasm. It catalyses the reaction diphosphate + H2O = 2 phosphate + H(+). The polypeptide is Putative inorganic pyrophosphatase C3A12.02 (Schizosaccharomyces pombe (strain 972 / ATCC 24843) (Fission yeast)).